Consider the following 418-residue polypeptide: Actin-related protein 3 (418 aa).

It belongs to the actin family. ARP3 subfamily. As to quaternary structure, component of the Arp2/3 complex.

Its subcellular location is the cytoplasm. The protein resides in the cytoskeleton. Functionally, functions as ATP-binding component of the Arp2/3 complex which is involved in regulation of actin polymerization and together with an activating nucleation-promoting factor (NPF) mediates the formation of branched actin networks. Seems to contact the pointed end of the daughter actin filament. Required during embryogenesis for the developmental migration of tail hemocytes anteriorly, along the ventral midline. The chain is Actin-related protein 3 from Drosophila melanogaster (Fruit fly).